Here is a 125-residue protein sequence, read N- to C-terminus: Holo-[acyl-carrier-protein] synthase (125 aa).

Mg(2+) contacts are provided by Asp8 and Glu56.

It belongs to the P-Pant transferase superfamily. AcpS family. Requires Mg(2+) as cofactor.

It localises to the cytoplasm. The catalysed reaction is apo-[ACP] + CoA = holo-[ACP] + adenosine 3',5'-bisphosphate + H(+). In terms of biological role, transfers the 4'-phosphopantetheine moiety from coenzyme A to a Ser of acyl-carrier-protein. The polypeptide is Holo-[acyl-carrier-protein] synthase (Borrelia turicatae (strain 91E135)).